A 20-amino-acid polypeptide reads, in one-letter code: 26 kDa protein (20 aa).

This Bacillus cereus protein is 26 kDa protein.